The following is a 79-amino-acid chain: Small ribosomal subunit protein bS21A (79 aa).

The interval 57–79 (LARKKLQREGLLPAPKKVLRPTR) is disordered.

Belongs to the bacterial ribosomal protein bS21 family.

The sequence is that of Small ribosomal subunit protein bS21A from Rhizobium johnstonii (strain DSM 114642 / LMG 32736 / 3841) (Rhizobium leguminosarum bv. viciae).